We begin with the raw amino-acid sequence, 45 residues long: Large ribosomal subunit protein bL34 (45 aa).

This sequence belongs to the bacterial ribosomal protein bL34 family.

The polypeptide is Large ribosomal subunit protein bL34 (Frankia casuarinae (strain DSM 45818 / CECT 9043 / HFP020203 / CcI3)).